A 168-amino-acid polypeptide reads, in one-letter code: G/U mismatch-specific DNA glycosylase (168 aa).

The protein belongs to the uracil-DNA glycosylase (UDG) superfamily. TDG/mug family. In terms of assembly, binds DNA as a monomer.

It is found in the cytoplasm. It carries out the reaction Specifically hydrolyzes mismatched double-stranded DNA and polynucleotides, releasing free uracil.. Excises ethenocytosine and uracil, which can arise by alkylation or deamination of cytosine, respectively, from the corresponding mispairs with guanine in ds-DNA. It is capable of hydrolyzing the carbon-nitrogen bond between the sugar-phosphate backbone of the DNA and the mispaired base. The complementary strand guanine functions in substrate recognition. Required for DNA damage lesion repair in stationary-phase cells. The polypeptide is G/U mismatch-specific DNA glycosylase (Enterobacter sp. (strain 638)).